A 611-amino-acid chain; its full sequence is ATP-dependent zinc metalloprotease FtsH 1 (611 aa).

Over 1 to 6 (MNDNNK) the chain is Cytoplasmic. Residues 7–27 (IIRSMVLYLLIFIAIYAMVQL) traverse the membrane as a helical segment. At 28–107 (YSQSTEPITD…KSEPQVGPPW (80 aa)) the chain is on the extracellular side. A helical transmembrane segment spans residues 108–128 (WVQMLPSLFLIVIFIIFWYIF). ATP is bound at residue 124–131 (FWYIFMQQ). Topologically, residues 129–611 (MQQAQGGGGS…GEDIEGVQFA (483 aa)) are cytoplasmic. H423 lines the Zn(2+) pocket. The active site involves E424. H427 and D499 together coordinate Zn(2+).

This sequence in the central section; belongs to the AAA ATPase family. It in the C-terminal section; belongs to the peptidase M41 family. As to quaternary structure, homohexamer. It depends on Zn(2+) as a cofactor.

The protein resides in the cell membrane. In terms of biological role, acts as a processive, ATP-dependent zinc metallopeptidase for both cytoplasmic and membrane proteins. Plays a role in the quality control of integral membrane proteins. This chain is ATP-dependent zinc metalloprotease FtsH 1, found in Thermoanaerobacter sp. (strain X514).